We begin with the raw amino-acid sequence, 120 residues long: Aspartate 1-decarboxylase (120 aa).

Ser25 serves as the catalytic Schiff-base intermediate with substrate; via pyruvic acid. A Pyruvic acid (Ser) modification is found at Ser25. Thr57 contacts substrate. The Proton donor role is filled by Tyr58. Position 73-75 (73-75 (GAA)) interacts with substrate.

Belongs to the PanD family. In terms of assembly, heterooctamer of four alpha and four beta subunits. Requires pyruvate as cofactor. Is synthesized initially as an inactive proenzyme, which is activated by self-cleavage at a specific serine bond to produce a beta-subunit with a hydroxyl group at its C-terminus and an alpha-subunit with a pyruvoyl group at its N-terminus.

The protein resides in the cytoplasm. It carries out the reaction L-aspartate + H(+) = beta-alanine + CO2. It functions in the pathway cofactor biosynthesis; (R)-pantothenate biosynthesis; beta-alanine from L-aspartate: step 1/1. Catalyzes the pyruvoyl-dependent decarboxylation of aspartate to produce beta-alanine. The polypeptide is Aspartate 1-decarboxylase (Deinococcus geothermalis (strain DSM 11300 / CIP 105573 / AG-3a)).